The primary structure comprises 205 residues: Methylthioribulose-1-phosphate dehydratase (205 aa).

The Zn(2+) site is built by His-94 and His-96.

Belongs to the aldolase class II family. MtnB subfamily. Requires Zn(2+) as cofactor.

It carries out the reaction 5-(methylsulfanyl)-D-ribulose 1-phosphate = 5-methylsulfanyl-2,3-dioxopentyl phosphate + H2O. The protein operates within amino-acid biosynthesis; L-methionine biosynthesis via salvage pathway; L-methionine from S-methyl-5-thio-alpha-D-ribose 1-phosphate: step 2/6. Catalyzes the dehydration of methylthioribulose-1-phosphate (MTRu-1-P) into 2,3-diketo-5-methylthiopentyl-1-phosphate (DK-MTP-1-P). This is Methylthioribulose-1-phosphate dehydratase from Pectobacterium atrosepticum (strain SCRI 1043 / ATCC BAA-672) (Erwinia carotovora subsp. atroseptica).